Consider the following 235-residue polypeptide: MTELARLKFYATQPHTCSYLPEEQATTLFLDPSQPMDVQVYADLSDMGFRRSGDHLYRPHCQNCSACVPARIPVNLFVPDRQQKRILKRNADIQVSSAKPVFTQEYFDLYQRYIEQRHADGDMFPPSREQFSTFLVRDLPFSRFYEFRVDQRLLAVAVTDLLPNGLSAVYTFYEPDEERRSLGRYAILWQIGEATRLQLQAVYLGYWIKNCKKMNYKTQYRPIELLTNQRWVTLY.

It belongs to the R-transferase family. Bpt subfamily.

The protein localises to the cytoplasm. The catalysed reaction is N-terminal L-glutamyl-[protein] + L-leucyl-tRNA(Leu) = N-terminal L-leucyl-L-glutamyl-[protein] + tRNA(Leu) + H(+). The enzyme catalyses N-terminal L-aspartyl-[protein] + L-leucyl-tRNA(Leu) = N-terminal L-leucyl-L-aspartyl-[protein] + tRNA(Leu) + H(+). Functions in the N-end rule pathway of protein degradation where it conjugates Leu from its aminoacyl-tRNA to the N-termini of proteins containing an N-terminal aspartate or glutamate. The protein is Aspartate/glutamate leucyltransferase of Pseudomonas syringae pv. tomato (strain ATCC BAA-871 / DC3000).